Here is a 98-residue protein sequence, read N- to C-terminus: Large ribosomal subunit protein uL23 (98 aa).

It belongs to the universal ribosomal protein uL23 family. Part of the 50S ribosomal subunit. Contacts protein L29, and trigger factor when it is bound to the ribosome.

In terms of biological role, one of the early assembly proteins it binds 23S rRNA. One of the proteins that surrounds the polypeptide exit tunnel on the outside of the ribosome. Forms the main docking site for trigger factor binding to the ribosome. This is Large ribosomal subunit protein uL23 from Clostridium kluyveri (strain NBRC 12016).